The chain runs to 541 residues: MVNDTLTINTKHLLYALYASGVKHFVVSPGSRTTPIALMLAEYERQNSEIVVYIDVDERSAGFFALGIAKTRQEPVVVLGTSGTAITEYMPAVAEAKVSHIPLIVLSTDRPAELQNNGAPQTLPQHRLFGELTPYFVSFTLQDEHEDNTAYIDYMTQKLVHSAMDTGQPLQINLPLRKPLMPKLHDSHDVSITPLTFEKTHIHILPIVIKQTHVVILAGPNEAADYKDELLQFSRDHQVPVIADILSRARTTDTIFGVDSLIKAHYLTDEYRPDLVIRFGGTPVSARVLQWLQRENIPVWHVDGHAGNDHSRHVTRAFQMTPTAFLTQLALTNDMTFYQRWQQLNDIPRHAVGEASVSCMLNRILPENTAVFVANSMAIRDMDDVFSGRTTQKIYANRGVNGIDGVVSTALGMSTVSSQRSILLTGDLTLFHDMNGLMMAKKYQLNIDIIVINNNGGSIFSFLPQSQADEYFEDMFGTPLDLDMSKVAYLYDMPYIQLKGAAALGECLSHQVHGPRLIEINFDRQENVANHRELLELNQHE.

It belongs to the TPP enzyme family. MenD subfamily. Homodimer. Mg(2+) serves as cofactor. The cofactor is Mn(2+). Thiamine diphosphate is required as a cofactor.

The catalysed reaction is isochorismate + 2-oxoglutarate + H(+) = 5-enolpyruvoyl-6-hydroxy-2-succinyl-cyclohex-3-ene-1-carboxylate + CO2. It participates in quinol/quinone metabolism; 1,4-dihydroxy-2-naphthoate biosynthesis; 1,4-dihydroxy-2-naphthoate from chorismate: step 2/7. The protein operates within quinol/quinone metabolism; menaquinone biosynthesis. Catalyzes the thiamine diphosphate-dependent decarboxylation of 2-oxoglutarate and the subsequent addition of the resulting succinic semialdehyde-thiamine pyrophosphate anion to isochorismate to yield 2-succinyl-5-enolpyruvyl-6-hydroxy-3-cyclohexene-1-carboxylate (SEPHCHC). In Leuconostoc citreum (strain KM20), this protein is 2-succinyl-5-enolpyruvyl-6-hydroxy-3-cyclohexene-1-carboxylate synthase.